The following is a 219-amino-acid chain: Cytidylate kinase (219 aa).

ATP is bound at residue 10–18 (GPAAAGKST).

This sequence belongs to the cytidylate kinase family. Type 1 subfamily.

It is found in the cytoplasm. It carries out the reaction CMP + ATP = CDP + ADP. The enzyme catalyses dCMP + ATP = dCDP + ADP. The protein is Cytidylate kinase of Staphylococcus aureus (strain JH9).